The chain runs to 871 residues: Pentatricopeptide repeat-containing protein At3g06920 (871 aa).

PPR repeat units lie at residues 97–131 (CPES…GFGP), 132–166 (SVNT…KFRP), 167–201 (AFSA…GYEP), 202–236 (TVHL…SLDA), 237–271 (DIVL…GLKP), 272–306 (DEVT…RRVP), 307–341 (CTYA…GSIP), 342–372 (SVIA…MKKD), 376–410 (NLST…GLFP), 411–445 (NVRT…VCTP), 446–480 (DEIT…DCRT), 481–515 (NSIV…NCSP), 516–550 (DLQL…RFVP), 551–585 (DARS…GCVL), 586–620 (DTRA…GFEP), 621–655 (TVVT…RIEL), 656–690 (NVVI…GLTP), 691–725 (NLYT…KCTP), 726–760 (NQVT…GMKP), 761–795 (STIS…GGVP), and 796–830 (DSAC…GLPI).

The protein belongs to the PPR family. P subfamily.

This is Pentatricopeptide repeat-containing protein At3g06920 from Arabidopsis thaliana (Mouse-ear cress).